The sequence spans 128 residues: NADPH-dependent 7-cyano-7-deazaguanine reductase (128 aa).

The active-site Thioimide intermediate is Cys34. Asp41 acts as the Proton donor in catalysis. Substrate contacts are provided by residues 56-58 (VEL) and 75-76 (HE).

This sequence belongs to the GTP cyclohydrolase I family. QueF type 1 subfamily.

Its subcellular location is the cytoplasm. It catalyses the reaction 7-aminomethyl-7-carbaguanine + 2 NADP(+) = 7-cyano-7-deazaguanine + 2 NADPH + 3 H(+). Its pathway is tRNA modification; tRNA-queuosine biosynthesis. Catalyzes the NADPH-dependent reduction of 7-cyano-7-deazaguanine (preQ0) to 7-aminomethyl-7-deazaguanine (preQ1). This Thermomicrobium roseum (strain ATCC 27502 / DSM 5159 / P-2) protein is NADPH-dependent 7-cyano-7-deazaguanine reductase.